Reading from the N-terminus, the 206-residue chain is Delta and osm-11 homolog protein 1 (206 aa).

This chain is Delta and osm-11 homolog protein 1 (dos-1), found in Caenorhabditis elegans.